Consider the following 1352-residue polypeptide: Inhibitor of Bruton tyrosine kinase (1352 aa).

ANK repeat units lie at residues 51–80 (FGRNAGHLASSCGKKGVLDWLIEKGVDLLV) and 85–114 (SGWTALHRSVFYGHIDCVWSLLKHGVSLYM). 3 RCC1 repeats span residues 141–194 (PTEV…FLSQ), 195–246 (KGQV…VLTD), and 248–301 (GCVY…LWTR). The 81-residue stretch at 565–645 (HDVTFQVGNR…MYTDTCDLLT (81 aa)) folds into the BTB 1 domain. The disordered stretch occupies residues 692–716 (AHTLSERQKSKPKSSKKGKGVGDDD). Over residues 701 to 710 (SKPKSSKKGK) the composition is skewed to basic residues. The region spanning 769 to 837 (YDVTMKSVDG…LYTDEAVVIK (69 aa)) is the BTB 2 domain. A disordered region spans residues 976-1002 (FKKAKTRAKKKPRKRSDSSGGYTLSDV). Over residues 977 to 989 (KKAKTRAKKKPRK) the composition is skewed to basic residues. The residue at position 991 (Ser991) is a Phosphoserine. Residues 993–1002 (SSGGYTLSDV) are compositionally biased toward polar residues. Phosphoserine is present on residues Ser1005, Ser1031, Ser1034, Ser1040, Ser1046, Ser1055, Ser1084, Ser1111, Ser1113, and Ser1116. Positions 1032–1094 (EGSYAGVASP…PTTKSAPQFI (63 aa)) are disordered. Polar residues predominate over residues 1084–1094 (SPTTKSAPQFI).

As to quaternary structure, interacts with the PH domain of BTK.

The protein resides in the cytoplasm. It is found in the membrane. Acts as an inhibitor of BTK tyrosine kinase activity, thereby playing a role in B-cell development. Down-regulates BTK kinase activity, leading to interference with BTK-mediated calcium mobilization and NF-kappa-B-driven transcription. This Mus musculus (Mouse) protein is Inhibitor of Bruton tyrosine kinase (Ibtk).